The following is a 1458-amino-acid chain: ATPase family AAA domain-containing protein 2B (1458 aa).

Residues Met-1–Asp-155 form a disordered region. Ser-16 is subject to Phosphoserine. Gly residues predominate over residues Pro-23–Gly-33. Positions Gly-34–Ala-58 are enriched in low complexity. Ser-79, Ser-81, and Ser-86 each carry phosphoserine. The segment covering Val-99–Trp-115 has biased composition (basic and acidic residues). The span at Asn-116–Gly-129 shows a compositional bias: polar residues. Ser-140 is subject to Phosphoserine. A Phosphothreonine modification is found at Thr-221. The tract at residues Asn-244–Leu-286 is disordered. The span at Thr-256 to Glu-279 shows a compositional bias: acidic residues. Ser-318 carries the phosphoserine modification. The span at Arg-321–Ile-332 shows a compositional bias: basic residues. A disordered region spans residues Arg-321 to Met-353. Gly-441–Thr-448 is a binding site for ATP. Ser-939 is modified (phosphoserine). Residues Gln-943 to Leu-974 are a coiled coil. The Bromo domain maps to Arg-951–Glu-1066. Disordered stretches follow at residues Asp-1189–Ser-1208, Gln-1217–Ser-1257, and Leu-1309–Glu-1330. Residues Asn-1240 to Asn-1252 are compositionally biased toward low complexity. Ser-1338 and Ser-1347 each carry phosphoserine.

Belongs to the AAA ATPase family. In terms of assembly, binds acetylated lysine residues in histone H1.4, H2A, H2B, H3 and H4 (in vitro).

Its subcellular location is the nucleus. This Homo sapiens (Human) protein is ATPase family AAA domain-containing protein 2B (ATAD2B).